The following is a 556-amino-acid chain: Serine/threonine-protein kinase PksC (556 aa).

One can recognise a Protein kinase domain in the interval 20-287 (YQLRDLLGEG…SAEAMRDECL (268 aa)). ATP contacts are provided by residues 26–34 (LGEGGMASV) and Lys-49. Asp-151 serves as the catalytic Proton acceptor. Disordered regions lie at residues 300 to 403 (IVPG…PGGK) and 435 to 485 (EDPE…DPDK). Residues 336–348 (QPTPSPGPNPYGT) are compositionally biased toward pro residues. 2 stretches are compositionally biased toward low complexity: residues 360–381 (YPQQ…QAAA) and 445–458 (STAS…KAAG). Residues 461 to 475 (GPDKEKTIEKDKCTE) are compositionally biased toward basic and acidic residues. The PASTA domain maps to 482–550 (DPDKIQVPDF…MPEIQLKVST (69 aa)).

It belongs to the protein kinase superfamily. Ser/Thr protein kinase family.

It carries out the reaction L-seryl-[protein] + ATP = O-phospho-L-seryl-[protein] + ADP + H(+). It catalyses the reaction L-threonyl-[protein] + ATP = O-phospho-L-threonyl-[protein] + ADP + H(+). This is Serine/threonine-protein kinase PksC (pksC) from Streptomyces coelicolor (strain ATCC BAA-471 / A3(2) / M145).